A 288-amino-acid chain; its full sequence is Acetyl-coenzyme A carboxylase carboxyl transferase subunit beta, chloroplastic (288 aa).

A CoA carboxyltransferase N-terminal domain is found at 30-288 (LWIKCFDCGL…QILSLHNHSK (259 aa)). Positions 34, 37, 53, and 56 each coordinate Zn(2+). The C4-type zinc-finger motif lies at 34–56 (CFDCGLLMYSKVLKRNLKVCPQC).

This sequence belongs to the AccD/PCCB family. Acetyl-CoA carboxylase is a heterohexamer composed of biotin carboxyl carrier protein, biotin carboxylase and 2 subunits each of ACCase subunit alpha and ACCase plastid-coded subunit beta (accD). The cofactor is Zn(2+).

The protein resides in the plastid. The protein localises to the chloroplast stroma. It carries out the reaction N(6)-carboxybiotinyl-L-lysyl-[protein] + acetyl-CoA = N(6)-biotinyl-L-lysyl-[protein] + malonyl-CoA. The protein operates within lipid metabolism; malonyl-CoA biosynthesis; malonyl-CoA from acetyl-CoA: step 1/1. Its function is as follows. Component of the acetyl coenzyme A carboxylase (ACC) complex. Biotin carboxylase (BC) catalyzes the carboxylation of biotin on its carrier protein (BCCP) and then the CO(2) group is transferred by the transcarboxylase to acetyl-CoA to form malonyl-CoA. The polypeptide is Acetyl-coenzyme A carboxylase carboxyl transferase subunit beta, chloroplastic (Pyropia yezoensis (Susabi-nori)).